Reading from the N-terminus, the 1242-residue chain is DNA polymerase catalytic subunit (1242 aa).

Disordered stretches follow at residues 14-38, 644-665, 877-898, and 1108-1163; these read GAVA…RPPQ, LQSA…SSSS, EGDS…GGSN, and TAPQ…KPPS. Residues 653–665 are compositionally biased toward low complexity; the sequence is GVSPGSGSNSSSS. The segment covering 1110–1119 has biased composition (polar residues); it reads PQGSSDNGDS. Positions 1145–1155 are enriched in basic and acidic residues; the sequence is ESNRRGGEPAK.

The protein belongs to the DNA polymerase type-B family. In terms of assembly, forms a complex with the ssDNA-binding protein UL57, the DNA polymerase processivity factor UL44, and the alkaline exonuclease UL98. Interacts with the putative helicase-primase complex composed of UL70, UL102 and UL105 proteins; these interactions may coordinate leading and lagging strand DNA synthesis at the replication fork.

Its subcellular location is the host nucleus. It carries out the reaction DNA(n) + a 2'-deoxyribonucleoside 5'-triphosphate = DNA(n+1) + diphosphate. Functionally, replicates viral genomic DNA in the late phase of lytic infection, producing long concatemeric DNA. The replication complex is composed of six viral proteins: the DNA polymerase, processivity factor, primase, primase-associated factor, helicase, and ssDNA-binding protein. In Homo sapiens (Human), this protein is DNA polymerase catalytic subunit (UL54).